Consider the following 157-residue polypeptide: uncharacterized protein (157 aa).

An N-terminal signal peptide occupies residues 1 to 17 (MSMKTKAAFHLVLFGLA). C18 carries the N-palmitoyl cysteine lipid modification. C18 carries S-diacylglycerol cysteine lipidation. 3 consecutive transmembrane segments (helical) span residues 42–64 (MVFD…YLYL), 98–120 (ASYI…YPLF), and 124–146 (IPFF…YVIS).

The protein localises to the cell membrane. This is an uncharacterized protein from Bacillus subtilis (strain 168).